The following is a 918-amino-acid chain: Aconitase-ribosomal protein bL21m fusion protein (918 aa).

The N-terminal 30 residues, 1 to 30, are a transit peptide targeting the mitochondrion; that stretch reads MATFARMKLCLSGSSQAIPSKGISLVAARF. The homocitrate dehydratase, mitochondrial stretch occupies residues 31 to 811; it reads QSTASRASYV…IDSIKQQPDH (781 aa). Substrate-binding positions include Gln-105 and 198-200; that span reads DSH. Residues Cys-394, Cys-457, and Cys-460 each contribute to the [4Fe-4S] cluster site. Substrate contacts are provided by residues Arg-484, Arg-489, Lys-619, and 680 to 681; that span reads AR. The segment at 812–918 is large ribosomal subunit protein bL21m; sequence YADAYIFNRH…ILRVTELKLN (107 aa).

This sequence in the N-terminal section; belongs to the aconitase/IPM isomerase family. In the C-terminal section; belongs to the bacterial ribosomal protein bL21 family. Component of the mitochondrial large ribosomal subunit (mt-LSU). Mature yeast 74S mitochondrial ribosomes consist of a small (37S) and a large (54S) subunit. The 37S small subunit contains a 15S ribosomal RNA (15S mt-rRNA) and at least 32 different proteins. The 54S large subunit contains a 21S rRNA (21S mt-rRNA) and at least 45 different proteins. The cofactor is [4Fe-4S] cluster.

The protein resides in the mitochondrion. The protein localises to the nucleus. The enzyme catalyses (2R)-homocitrate = cis-homoaconitate + H2O. Its pathway is amino-acid biosynthesis; L-lysine biosynthesis via AAA pathway; L-alpha-aminoadipate from 2-oxoglutarate: step 2/5. Catalyzes the reversible dehydration of (R)-homocitrate to cis-homoaconitate, a step in the alpha-aminoadipate pathway for lysine biosynthesis. Its function is as follows. Component of the mitochondrial ribosome (mitoribosome), a dedicated translation machinery responsible for the synthesis of mitochondrial genome-encoded proteins, including at least some of the essential transmembrane subunits of the mitochondrial respiratory chain. The mitoribosomes are attached to the mitochondrial inner membrane and translation products are cotranslationally integrated into the membrane. The protein is Aconitase-ribosomal protein bL21m fusion protein (aco2) of Schizosaccharomyces pombe (strain 972 / ATCC 24843) (Fission yeast).